Here is a 1198-residue protein sequence, read N- to C-terminus: Potassium/sodium hyperpolarization-activated cyclic nucleotide-gated channel 4 (1198 aa).

Topologically, residues methionine 1 to aspartate 266 are cytoplasmic. Residues isoleucine 25–serine 183 form a disordered region. Residues methionine 26–glycine 36 are compositionally biased toward acidic residues. Residues serine 105–serine 118 show a composition bias toward gly residues. Residues histidine 121 to isoleucine 132 show a composition bias toward basic and acidic residues. Serine 139 carries the phosphoserine modification. A compositionally biased stretch (pro residues) spans alanine 164–proline 174. An involved in subunit assembly region spans residues glycine 209–aspartate 260. A helical membrane pass occupies residues leucine 267 to phenylalanine 287. At lysine 288–threonine 293 the chain is on the extracellular side. Residues proline 294–phenylalanine 314 form a helical membrane-spanning segment. The Cytoplasmic segment spans residues arginine 315–serine 340. The chain crosses the membrane as a helical span at residues tryptophan 341–threonine 361. Residues arginine 362–tyrosine 368 lie on the Extracellular side of the membrane. A helical; Voltage-sensor membrane pass occupies residues lysine 369–leucine 389. At arginine 390–asparagine 420 the chain is on the cytoplasmic side. The chain crosses the membrane as a helical span at residues leucine 421–methionine 441. At leucine 442 to glutamine 464 the chain is on the extracellular side. An N-linked (GlcNAc...) asparagine glycan is attached at asparagine 458. The pore-forming intramembrane region spans tyrosine 465–proline 486. The Extracellular portion of the chain corresponds to valine 487–methionine 496. Residues leucine 497–isoleucine 517 traverse the membrane as a helical segment. Residues glutamine 518–leucine 1198 are Cytoplasmic-facing. 3',5'-cyclic GMP is bound by residues tyrosine 559, lysine 562, phenylalanine 564, and glutamate 566. Residues glycine 659, glutamate 660, cysteine 662, arginine 669, threonine 670, valine 673, and arginine 710 each contribute to the 3',5'-cyclic AMP site. Positions alanine 804–leucine 1198 are disordered. Composition is skewed to low complexity over residues serine 831 to serine 856 and serine 866 to serine 880. The span at serine 881 to threonine 894 shows a compositional bias: pro residues. Composition is skewed to low complexity over residues proline 895–glycine 905, leucine 913–alanine 937, and arginine 965–leucine 985. The segment covering glycine 1027–proline 1040 has biased composition (pro residues). Over residues alanine 1043 to proline 1054 the composition is skewed to low complexity. A phosphoserine mark is found at serine 1103 and serine 1106. Residues alanine 1120–proline 1132 are compositionally biased toward gly residues.

The protein belongs to the potassium channel HCN family. Homotetramer. The potassium channel is composed of a homo- or heterotetrameric complex of pore-forming subunits. Interacts with PEX5L with a 4:4 HCN4:PEX5L stoichiometry; reduces the effects of cAMP on the voltage-dependence and rate of activation. Interacts with IRAG1; regulates HCN4 channel activity. Interacts with IRAG2; regulates HCN4 channel activity. Post-translationally, S-palmitoylated. Highly expressed in pyramidal and granule layer of the hippocampus, in thalamus anterior nucleus, in the supraoptic nucleus in hypothalamus, in cerebellum, and in trapezoid nuclei and superior olivary complex in the auditory system. Detected in a subset of elongated cells in taste buds.

The protein localises to the cell membrane. It catalyses the reaction K(+)(in) = K(+)(out). The catalysed reaction is Na(+)(in) = Na(+)(out). Its activity is regulated as follows. Activated by cAMP and at 100 times higher concentrationsand to a lesser extent by cGMP and cCMP. cAMP binding causes a conformation change that leads to the assembly of an active tetramer and channel opening. Binding of cAMP removes a tonic inhibition conferred by cyclic nucleotide-binding domain (CNBD) on channel opening. Cyclic dinucleotides can modulate HCN4 channel; cyclic dinucleotides acting as potent antagonists of cAMP. Inhibited by extracellular Cs(+) ions. Auxiliary subunits can also regulate HCN4 channel. IRAG1 causes a gain-of-function by shifting HCN4 activation to more depolarized membrane potentials in the absence of cAMP. In contrast, IRAG2 causes a loss-of-function by inhibiting cAMP-dependent potentiation of HCN4 activation. Its function is as follows. Hyperpolarization-activated ion channel that are permeable to Na(+) and K(+) ions with very slow activation and inactivation. Exhibits higher selectivity for K(+) over Na(+) ions. Contributes to the native pacemaker currents in heart (If) that regulate the rhythm of heart beat. Contributes to the native pacemaker currents in neurons (Ih). May mediate responses to sour stimuli. The polypeptide is Potassium/sodium hyperpolarization-activated cyclic nucleotide-gated channel 4 (Hcn4) (Rattus norvegicus (Rat)).